The primary structure comprises 152 residues: SKP1-like protein 10 (152 aa).

The interval 94–152 (IMAANYLNIKSLLDLACQTVADMIKDNTVEHTRKFFNIENDYTHEEEEAVRRENQWGFE) is interaction with the F-box domain of F-box proteins.

It belongs to the SKP1 family. As to quaternary structure, part of a SCF (SKP1-cullin-F-box) protein ligase complex. Interacts with CPR1/CPR30. In terms of tissue distribution, expressed in young seedlings, roots, leaves, floral stems, inflorescences, and siliques.

It localises to the nucleus. It functions in the pathway protein modification; protein ubiquitination. Functionally, involved in ubiquitination and subsequent proteasomal degradation of target proteins. Together with CUL1, RBX1 and a F-box protein, it forms a SCF E3 ubiquitin ligase complex. The functional specificity of this complex depends on the type of F-box protein. In the SCF complex, it serves as an adapter that links the F-box protein to CUL1. The sequence is that of SKP1-like protein 10 (ASK10) from Arabidopsis thaliana (Mouse-ear cress).